The primary structure comprises 406 residues: Bifunctional enzyme Fae/Hps (406 aa).

Positions 1–164 are formaldehyde-activating enzyme; it reads MSDIYEIGEA…AEKDRGTHPI (164 aa). H20 acts as the Proton donor in catalysis. Substrate-binding residues include D22, L51, K69, T71, and Q86. The interval 165 to 406 is 3-hexulose-6-phosphate synthase; it reads MGFKAMKLWN…RLALDEDEKI (242 aa).

It in the N-terminal section; belongs to the formaldehyde-activating enzyme family. The protein in the C-terminal section; belongs to the HPS/KGPDC family. HPS subfamily.

It catalyses the reaction 5,6,7,8-tetrahydromethanopterin + formaldehyde = 5,10-methylenetetrahydromethanopterin + H2O. It carries out the reaction D-ribulose 5-phosphate + formaldehyde = D-arabino-hex-3-ulose 6-phosphate. The protein operates within carbohydrate biosynthesis; D-ribose 5-phosphate biosynthesis. Its function is as follows. Catalyzes the condensation of formaldehyde with tetrahydromethanopterin (H(4)MPT) to 5,10-methylenetetrahydromethanopterin. In terms of biological role, catalyzes the reversible formation of ribulose-5-phosphate and formaldehyde from 3-hexulose-6-phosphate. The polypeptide is Bifunctional enzyme Fae/Hps (Methanosphaera stadtmanae (strain ATCC 43021 / DSM 3091 / JCM 11832 / MCB-3)).